Consider the following 259-residue polypeptide: Glucosamine-6-phosphate deaminase (259 aa).

The Proton acceptor; for enolization step role is filled by Asp66. The For ring-opening step role is filled by Asp135. His137 serves as the catalytic Proton acceptor; for ring-opening step. Glu142 acts as the For ring-opening step in catalysis.

The protein belongs to the glucosamine/galactosamine-6-phosphate isomerase family. NagB subfamily.

It carries out the reaction alpha-D-glucosamine 6-phosphate + H2O = beta-D-fructose 6-phosphate + NH4(+). It participates in amino-sugar metabolism; N-acetylneuraminate degradation; D-fructose 6-phosphate from N-acetylneuraminate: step 5/5. Its function is as follows. Catalyzes the reversible isomerization-deamination of glucosamine 6-phosphate (GlcN6P) to form fructose 6-phosphate (Fru6P) and ammonium ion. This chain is Glucosamine-6-phosphate deaminase, found in Rhodococcus jostii (strain RHA1).